A 667-amino-acid chain; its full sequence is Leucine-rich repeat-containing protein 43 (667 aa).

Residues 1 to 11 (METSESSTSDY) show a composition bias toward polar residues. A disordered region spans residues 1 to 24 (METSESSTSDYRQTEGEGEGVPGT). LRR repeat units lie at residues 148–169 (KLEELVLSANKIEEIDANNLPP), 170–191 (TLKVLELYGNLIASMECLCSAP), 194–213 (RLQHLGLGHNKLLGPLESLY), and 221–242 (QLVSLDLGFNNLTDLQNMILGL). In terms of domain architecture, LRRCT spans 256–294 (NPLSLVPYYRGFTIDSLAHLCVLDDITVSPNEKHQFRGL). 3 disordered regions span residues 374–407 (FSGTDEEDQQEDPLDGRHRHRGRQRFHPGSTEEM), 533–570 (ESPLPAKKGKDNNKKKEPAKDKVHKKKKEPPRELRQDP), and 616–640 (SKKVKKSLKKDRSKTVPPTMESGYQ). Residues 377 to 386 (TDEEDQQEDP) show a composition bias toward acidic residues. Over residues 390–399 (RHRHRGRQRF) the composition is skewed to basic residues. The span at 540–553 (KGKDNNKKKEPAKD) shows a compositional bias: basic and acidic residues. Residues 617–627 (KKVKKSLKKDR) are compositionally biased toward basic residues.

This is Leucine-rich repeat-containing protein 43 (Lrrc43) from Mus musculus (Mouse).